A 302-amino-acid polypeptide reads, in one-letter code: Giardin subunit alpha-5 (302 aa).

Annexin repeat units follow at residues 1-72 (MTST…VNMW), 74-144 (SRHE…VAGW), 153-226 (GSVE…AAHF), and 230-298 (GLPV…TLWR).

Belongs to the annexin family. Giardin subunit alpha subfamily.

The protein resides in the cytoplasm. The protein localises to the cytoskeleton. In terms of biological role, giardins are involved in parasite attachment to the intestinal mucosa and in the cytoskeletal disassembly and reassembly that marks the transition from infectious trophozoite to transmissible cyst. They may interact with other cytoskeletal proteins such as microtubules in the microribbons or crossbridges, to maintain the integrity of the ventral disk. The chain is Giardin subunit alpha-5 from Giardia intestinalis (Giardia lamblia).